The primary structure comprises 277 residues: Inositol monophosphatase 1 (277 aa).

Positions 70, 90, 92, and 93 each coordinate Mg(2+). E70 is a binding site for substrate. Substrate contacts are provided by residues 92–95 (IDGT), 194–196 (GTA), E213, and D220. D220 serves as a coordination point for Mg(2+).

Belongs to the inositol monophosphatase superfamily. Homodimer. Requires Mg(2+) as cofactor. Ubiquitous.

It localises to the cytoplasm. The enzyme catalyses a myo-inositol phosphate + H2O = myo-inositol + phosphate. It carries out the reaction 1D-myo-inositol 1-phosphate + H2O = myo-inositol + phosphate. The catalysed reaction is 1D-myo-inositol 2-phosphate + H2O = myo-inositol + phosphate. It catalyses the reaction 1D-myo-inositol 3-phosphate + H2O = myo-inositol + phosphate. The enzyme catalyses 1D-myo-inositol 4-phosphate + H2O = myo-inositol + phosphate. It carries out the reaction 1D-myo-inositol 5-phosphate + H2O = myo-inositol + phosphate. The catalysed reaction is 1D-myo-inositol 6-phosphate + H2O = myo-inositol + phosphate. It catalyses the reaction scyllo-inositol 1-phosphate + H2O = scyllo-inositol + phosphate. The enzyme catalyses alpha-D-galactose 1-phosphate + H2O = D-galactose + phosphate. It carries out the reaction alpha-D-glucose 1-phosphate + H2O = D-glucose + phosphate. The catalysed reaction is D-glucose 6-phosphate + H2O = D-glucose + phosphate. It catalyses the reaction beta-D-fructose 1-phosphate + H2O = D-fructose + phosphate. The enzyme catalyses glycerol 2-phosphate + H2O = glycerol + phosphate. It carries out the reaction adenosine 2'-phosphate + H2O = adenosine + phosphate. It participates in polyol metabolism; myo-inositol biosynthesis; myo-inositol from D-glucose 6-phosphate: step 2/2. Activity with myo-inositol monophosphate and D-galactose 1-phosphate is inhibited by Li(+), Ca(2+) and Mn(2+), but also by Mg(2+) at concentrations above 3 mM. In terms of biological role, phosphatase involved in the dephosphorylation of myo-inositol monophosphate to generate myo-inositol. Is also able to dephosphorylate scyllo-inositol-phosphate, myo-inositol 1,4-diphosphate, scyllo-inositol-1,3-diphosphate and scyllo-inositol-1,4-diphosphate. Also dephosphorylates in vitro other sugar-phosphates including D-galactose-1-phosphate, glucose-1-phosphate, glucose-6-phosphate, fructose-1-phosphate, beta-glycerophosphate and 2'-AMP. Responsible for the provision of inositol required for synthesis of phosphatidylinositol and polyphosphoinositides, and involved in maintaining normal brain function. Has been implicated as the pharmacological target for lithium Li(+) action in brain. Is equally active with myo-inositol monophosphate and D-galactose 1-phosphate. In Rattus norvegicus (Rat), this protein is Inositol monophosphatase 1 (Impa1).